A 405-amino-acid chain; its full sequence is Argininosuccinate synthase (405 aa).

Residues 10–18 and Ala37 contribute to the ATP site; that span reads AYSGGLDTS. 2 residues coordinate L-citrulline: Tyr88 and Ser93. Gly118 is a binding site for ATP. Residues Thr120, Asn124, and Asp125 each contribute to the L-aspartate site. Asn124 is a binding site for L-citrulline. The L-citrulline site is built by Arg128, Ser179, Ser188, Glu264, and Tyr276.

The protein belongs to the argininosuccinate synthase family. Type 1 subfamily. As to quaternary structure, homotetramer.

Its subcellular location is the cytoplasm. The catalysed reaction is L-citrulline + L-aspartate + ATP = 2-(N(omega)-L-arginino)succinate + AMP + diphosphate + H(+). The protein operates within amino-acid biosynthesis; L-arginine biosynthesis; L-arginine from L-ornithine and carbamoyl phosphate: step 2/3. The protein is Argininosuccinate synthase of Pseudomonas fluorescens (strain SBW25).